Consider the following 93-residue polypeptide: Guanine nucleotide-binding protein subunit gamma (93 aa).

Positions 1–22 (MPQYASRDVGDPSQIKKNKQSM) are disordered. Cys89 carries S-palmitoyl cysteine lipidation. Cys90 carries the post-translational modification Cysteine methyl ester. A lipid anchor (S-farnesyl cysteine) is attached at Cys90. The propeptide at 91 to 93 (VVM) is removed in mature form.

The protein belongs to the G protein gamma family. In terms of assembly, g proteins are composed of 3 units, alpha, beta and gamma.

The protein localises to the membrane. This Neurospora crassa (strain ATCC 24698 / 74-OR23-1A / CBS 708.71 / DSM 1257 / FGSC 987) protein is Guanine nucleotide-binding protein subunit gamma (gng-1).